We begin with the raw amino-acid sequence, 628 residues long: 1-deoxy-D-xylulose-5-phosphate synthase (628 aa).

Thiamine diphosphate-binding positions include His-77 and 118 to 120 (GHS). Residue Asp-150 participates in Mg(2+) binding. Residues 151–152 (GA), Asn-180, Tyr-288, and Glu-369 contribute to the thiamine diphosphate site. Asn-180 contributes to the Mg(2+) binding site.

It belongs to the transketolase family. DXPS subfamily. Homodimer. It depends on Mg(2+) as a cofactor. Requires thiamine diphosphate as cofactor.

It catalyses the reaction D-glyceraldehyde 3-phosphate + pyruvate + H(+) = 1-deoxy-D-xylulose 5-phosphate + CO2. It participates in metabolic intermediate biosynthesis; 1-deoxy-D-xylulose 5-phosphate biosynthesis; 1-deoxy-D-xylulose 5-phosphate from D-glyceraldehyde 3-phosphate and pyruvate: step 1/1. Its function is as follows. Catalyzes the acyloin condensation reaction between C atoms 2 and 3 of pyruvate and glyceraldehyde 3-phosphate to yield 1-deoxy-D-xylulose-5-phosphate (DXP). In Aquifex aeolicus (strain VF5), this protein is 1-deoxy-D-xylulose-5-phosphate synthase.